The following is a 932-amino-acid chain: MERTLLNPPPSLRSPACRTTTATRIRPSSSMATMIPTPPPMRHARLVKASAAGRRELHAPPIAPPILLGLRSPAAASYGRASGGGGRRRGARVVARMGFDMFTDKAIKAIMMAQEEARRLGHHAAGSEQLLLGVIGEGTGIGAKVLRGAGLSLKAARAEVEKMAGRGPGMVPMEIKFTPAAKNVLQASQEEAHQLGHNYVGSEHLLLGLLREHGAALVVLKNFQADPSNIRSEVIRMISDTSEDHQPVSAAVGGGSSTTKIPTLLEYGTNLTKLAEEGKLDPVVGRQNQVDRVVQILGRRTKNNPCLIGEPGVGKTAIAEGLAQRIAAGNVPETIDGKTVITLDMGLLVAGTKYRGEFEERLKKLMDEVKQNGEIILFLDEVHTLVGAGAAEGAIDAANILKPALARGELQCIGATTIDEYRKHIEKDPALERRFQPVKVPEPTVDETIGILKGLRERYEIHHKVQYTDESLIAAARLSYQYISDRFLPDKAIDLVDEAGSLVRLRNAQLPDEAKELEKKLKKIMAEKSEAIRSQDFEKAGALRGEEVELKSEIMSLVDKSKEMSKAAVDSGESPGPTVTEADVQHIVSSWTGVPVEKVTVDESSRLLAMESSLHRRIVGQDEAVTAISRAIRRARVGLRDPRRPIASFIFAGPTGVGKSELAKALAAYYYGSPEAMVRLDMSEFMEKHTVAKLVGSPPGYVGYAEGGQLTEAIRRRPYAVVLFDEVEKAHPDVFNMMLQILDDGRLTDSKGRTVDFKNSLIIMTSNVGSGVIEKGGRQLGFAGDGSGDGGYGVIKNMVEEEMKRYFRPEFLNRLDEMIVFRQLTKLEVKEIAGIMLAEVTGRIGGKGIGLQVTERFKELVVEQGFDPSYGARPLRRAIMRLLEDTLTDKMLAGEICAGDSVIVDADGDGNVVVVGRRSAGLPDLKSPAFTV.

Positions 1-20 are disordered; it reads MERTLLNPPPSLRSPACRTT. A chloroplast-targeting transit peptide spans 1-48; sequence MERTLLNPPPSLRSPACRTTTATRIRPSSSMATMIPTPPPMRHARLVK. The Clp R domain maps to 99 to 240; that stretch reads FDMFTDKAIK…RSEVIRMISD (142 aa). Repeat stretches follow at residues 102–167 and 177–240; these read FTDK…AGRG and FTPA…MISD. Residues 264–511 are i; sequence LLEYGTNLTK…LVRLRNAQLP (248 aa). 309-316 serves as a coordination point for ATP; the sequence is GEPGVGKT. In terms of domain architecture, UVR spans 518 to 553; that stretch reads EKKLKKIMAEKSEAIRSQDFEKAGALRGEEVELKSE. Residues 579 to 770 form an II region; the sequence is VTEADVQHIV…LIIMTSNVGS (192 aa). 653–660 serves as a coordination point for ATP; it reads GPTGVGKS.

The protein belongs to the ClpA/ClpB family. ClpC subfamily.

It is found in the plastid. It localises to the chloroplast. Molecular chaperone that may interact with a ClpP-like protease involved in degradation of denatured proteins in the chloroplast. In Oryza sativa subsp. japonica (Rice), this protein is Chaperone protein ClpC3, chloroplastic (CLPC3).